The following is a 92-amino-acid chain: Small ribosomal subunit protein uS19 (92 aa).

This sequence belongs to the universal ribosomal protein uS19 family.

In terms of biological role, protein S19 forms a complex with S13 that binds strongly to the 16S ribosomal RNA. The chain is Small ribosomal subunit protein uS19 from Cyanothece sp. (strain PCC 7425 / ATCC 29141).